We begin with the raw amino-acid sequence, 432 residues long: MALYQGAAFFMLVASCVCSTVFHREQQTWFEGVFLSSMCPVNVSAGTLYGIMFDAGSTGTRIHVYTFVQKVPDNTGQLPVLEGEIFDSVKPGLSAFVDQPKQGAETVQELLEVAKDSIPPSHWKRTPVVLKATAGLRLLPEEKAEALLFEVKEIFKKSPFLVPDDSVSIMDGSYEGILAWVTVNFLTGQLHGHNQETVGTLDLGGASTQITFLPQFEKTLEQTPRDYLTSFEMFNSTYKLYTHSYLGFGLKAARLATLGALETAGIDGYTFRSACLPRWLEAEWIFGGVKYQYGGNQEAGEVGFEPCYAEVLRVVQGKLHQPDEVQRGSFYAFSYYYDRAVDTDMIDYEKGGVLKVEDFERKAREVCDNLENFTSGSPFLCMDLSYITALLKDGFGFASSTVLQLTKKVNNIETGWALGATFHLLQSLGISH.

An N-terminal signal peptide occupies residues 1–24 (MALYQGAAFFMLVASCVCSTVFHR). Residue Glu175 is the Proton acceptor of the active site. Residue Asn235 is glycosylated (N-linked (GlcNAc...) asparagine). Intrachain disulfides connect Cys275–Cys307 and Cys367–Cys381. An N-linked (GlcNAc...) asparagine glycan is attached at Asn372.

It belongs to the GDA1/CD39 NTPase family. As to quaternary structure, monomer; active form. Homodimer; disulfide-linked. Homodimers are enzymatically inactive. Ca(2+) serves as cofactor. Mg(2+) is required as a cofactor. N-glycosylated; high-mannose type.

It is found in the endoplasmic reticulum. The protein localises to the secreted. The enzyme catalyses a ribonucleoside 5'-diphosphate + H2O = a ribonucleoside 5'-phosphate + phosphate + H(+). The catalysed reaction is GDP + H2O = GMP + phosphate + H(+). It carries out the reaction UDP + H2O = UMP + phosphate + H(+). It catalyses the reaction IDP + H2O = IMP + phosphate + H(+). The enzyme catalyses CDP + H2O = CMP + phosphate + H(+). The catalysed reaction is ADP + H2O = AMP + phosphate + H(+). Its pathway is protein modification; protein glycosylation. Its function is as follows. Hydrolyzes nucleoside diphosphates with a preference for GDP, IDP and UDP compared to ADP and CDP. In the lumen of the endoplasmic reticulum, hydrolyzes UDP that acts as an end-product feedback inhibitor of the UDP-Glc:glycoprotein glucosyltransferases. UMP can be transported back by an UDP-sugar antiporter to the cytosol where it is consumed to regenerate UDP-glucose. Therefore, it positively regulates protein reglucosylation by clearing UDP from the ER lumen and by promoting the regeneration of UDP-glucose. Protein reglucosylation is essential to proper glycoprotein folding and quality control in the ER. This is Ectonucleoside triphosphate diphosphohydrolase 5 (ENTPD5) from Bos taurus (Bovine).